We begin with the raw amino-acid sequence, 432 residues long: Adenylosuccinate synthetase (432 aa).

Residues 12-18 and 40-42 each bind GTP; these read GDEGKGK and GHT. Catalysis depends on Asp13, which acts as the Proton acceptor. Mg(2+) is bound by residues Asp13 and Gly40. IMP is bound by residues 13–16, 38–41, Thr132, Arg146, Gln226, Thr241, and Arg305; these read DEGK and NAGH. His41 serves as the catalytic Proton donor. Substrate is bound at residue 301–307; it reads VVTGRKR. GTP-binding positions include Arg307, 333–335, and 415–417; these read KLD and STS.

The protein belongs to the adenylosuccinate synthetase family. Homodimer. Mg(2+) serves as cofactor.

The protein resides in the cytoplasm. It catalyses the reaction IMP + L-aspartate + GTP = N(6)-(1,2-dicarboxyethyl)-AMP + GDP + phosphate + 2 H(+). Its pathway is purine metabolism; AMP biosynthesis via de novo pathway; AMP from IMP: step 1/2. In terms of biological role, plays an important role in the de novo pathway of purine nucleotide biosynthesis. Catalyzes the first committed step in the biosynthesis of AMP from IMP. In Rhizobium leguminosarum bv. trifolii (strain WSM2304), this protein is Adenylosuccinate synthetase.